We begin with the raw amino-acid sequence, 485 residues long: Cysteine--tRNA ligase (485 aa).

Cys28 contributes to the Zn(2+) binding site. The 'HIGH' region signature appears at 30-40 (MTVYDYCHLGH). Zn(2+) contacts are provided by Cys212, His237, and Glu241. A 'KMSKS' region motif is present at residues 269 to 273 (KMSKS). Residue Lys272 coordinates ATP.

It belongs to the class-I aminoacyl-tRNA synthetase family. In terms of assembly, monomer. It depends on Zn(2+) as a cofactor.

It localises to the cytoplasm. It catalyses the reaction tRNA(Cys) + L-cysteine + ATP = L-cysteinyl-tRNA(Cys) + AMP + diphosphate. In Bordetella bronchiseptica (strain ATCC BAA-588 / NCTC 13252 / RB50) (Alcaligenes bronchisepticus), this protein is Cysteine--tRNA ligase.